The sequence spans 448 residues: UDP-N-acetylmuramoylalanine--D-glutamate ligase (448 aa).

116–122 (GSNAKST) lines the ATP pocket.

This sequence belongs to the MurCDEF family.

It is found in the cytoplasm. The catalysed reaction is UDP-N-acetyl-alpha-D-muramoyl-L-alanine + D-glutamate + ATP = UDP-N-acetyl-alpha-D-muramoyl-L-alanyl-D-glutamate + ADP + phosphate + H(+). It participates in cell wall biogenesis; peptidoglycan biosynthesis. In terms of biological role, cell wall formation. Catalyzes the addition of glutamate to the nucleotide precursor UDP-N-acetylmuramoyl-L-alanine (UMA). The polypeptide is UDP-N-acetylmuramoylalanine--D-glutamate ligase (Pseudomonas fluorescens (strain Pf0-1)).